The following is a 177-amino-acid chain: Large ribosomal subunit protein uL6 (177 aa).

Belongs to the universal ribosomal protein uL6 family. As to quaternary structure, part of the 50S ribosomal subunit.

Its function is as follows. This protein binds to the 23S rRNA, and is important in its secondary structure. It is located near the subunit interface in the base of the L7/L12 stalk, and near the tRNA binding site of the peptidyltransferase center. The protein is Large ribosomal subunit protein uL6 of Bordetella avium (strain 197N).